A 194-amino-acid chain; its full sequence is Adenylate kinase (194 aa).

Residue 10–15 (GAGKGT) coordinates ATP. The segment at 30–59 (STGDMLRAAVAQQSEIGKRAKAVMDAGQLV) is NMP. Residues threonine 31, arginine 36, 57–59 (QLV), 85–88 (GYPR), and glutamine 92 each bind AMP. An LID region spans residues 126–142 (SRVAETIAKGGQVRSDD). Residue arginine 127 coordinates ATP. AMP is bound by residues arginine 139 and arginine 150. Alanine 178 serves as a coordination point for ATP.

This sequence belongs to the adenylate kinase family. In terms of assembly, monomer.

It is found in the cytoplasm. It carries out the reaction AMP + ATP = 2 ADP. Its pathway is purine metabolism; AMP biosynthesis via salvage pathway; AMP from ADP: step 1/1. Catalyzes the reversible transfer of the terminal phosphate group between ATP and AMP. Plays an important role in cellular energy homeostasis and in adenine nucleotide metabolism. The protein is Adenylate kinase of Brucella canis (strain ATCC 23365 / NCTC 10854 / RM-666).